The sequence spans 139 residues: Large ribosomal subunit protein uL16 (139 aa).

The protein belongs to the universal ribosomal protein uL16 family. Part of the 50S ribosomal subunit.

Its function is as follows. Binds 23S rRNA and is also seen to make contacts with the A and possibly P site tRNAs. This is Large ribosomal subunit protein uL16 from Chlorobium chlorochromatii (strain CaD3).